A 358-amino-acid chain; its full sequence is Histidinol-phosphate aminotransferase (358 aa).

At K217 the chain carries N6-(pyridoxal phosphate)lysine.

It belongs to the class-II pyridoxal-phosphate-dependent aminotransferase family. Histidinol-phosphate aminotransferase subfamily. In terms of assembly, homodimer. It depends on pyridoxal 5'-phosphate as a cofactor.

The enzyme catalyses L-histidinol phosphate + 2-oxoglutarate = 3-(imidazol-4-yl)-2-oxopropyl phosphate + L-glutamate. Its pathway is amino-acid biosynthesis; L-histidine biosynthesis; L-histidine from 5-phospho-alpha-D-ribose 1-diphosphate: step 7/9. The protein is Histidinol-phosphate aminotransferase of Ruminiclostridium cellulolyticum (strain ATCC 35319 / DSM 5812 / JCM 6584 / H10) (Clostridium cellulolyticum).